Consider the following 474-residue polypeptide: tRNA-2-methylthio-N(6)-dimethylallyladenosine synthase (474 aa).

Residues 3–120 (KKLHIKTWGC…LPEMINHVQG (118 aa)) enclose the MTTase N-terminal domain. Positions 12, 49, 83, 157, 161, and 164 each coordinate [4Fe-4S] cluster. In terms of domain architecture, Radical SAM core spans 143–375 (RADGPTAFVS…QDRITKQAMR (233 aa)). One can recognise a TRAM domain in the interval 378–441 (RLMLGTVQRI…TNSLRGIVVR (64 aa)).

This sequence belongs to the methylthiotransferase family. MiaB subfamily. Monomer. [4Fe-4S] cluster serves as cofactor.

It localises to the cytoplasm. It carries out the reaction N(6)-dimethylallyladenosine(37) in tRNA + (sulfur carrier)-SH + AH2 + 2 S-adenosyl-L-methionine = 2-methylsulfanyl-N(6)-dimethylallyladenosine(37) in tRNA + (sulfur carrier)-H + 5'-deoxyadenosine + L-methionine + A + S-adenosyl-L-homocysteine + 2 H(+). Catalyzes the methylthiolation of N6-(dimethylallyl)adenosine (i(6)A), leading to the formation of 2-methylthio-N6-(dimethylallyl)adenosine (ms(2)i(6)A) at position 37 in tRNAs that read codons beginning with uridine. This is tRNA-2-methylthio-N(6)-dimethylallyladenosine synthase from Pectobacterium atrosepticum (strain SCRI 1043 / ATCC BAA-672) (Erwinia carotovora subsp. atroseptica).